The following is a 43-amino-acid chain: MDSREQIDWTCNECNFSWIGDNSDFSCPSCDEIDIKPKNKILD.

The polypeptide is SPbeta prophage-derived uncharacterized protein YotD (yotD) (Bacillus subtilis (strain 168)).